A 292-amino-acid polypeptide reads, in one-letter code: Ribosomal protein L11 methyltransferase (292 aa).

S-adenosyl-L-methionine contacts are provided by T145, G166, D188, and N229.

This sequence belongs to the methyltransferase superfamily. PrmA family.

It localises to the cytoplasm. The enzyme catalyses L-lysyl-[protein] + 3 S-adenosyl-L-methionine = N(6),N(6),N(6)-trimethyl-L-lysyl-[protein] + 3 S-adenosyl-L-homocysteine + 3 H(+). Functionally, methylates ribosomal protein L11. The polypeptide is Ribosomal protein L11 methyltransferase (Alteromonas mediterranea (strain DSM 17117 / CIP 110805 / LMG 28347 / Deep ecotype)).